We begin with the raw amino-acid sequence, 292 residues long: Elongation factor Ts (292 aa).

The involved in Mg(2+) ion dislocation from EF-Tu stretch occupies residues 82–85 (TDFV).

This sequence belongs to the EF-Ts family.

The protein localises to the cytoplasm. Its function is as follows. Associates with the EF-Tu.GDP complex and induces the exchange of GDP to GTP. It remains bound to the aminoacyl-tRNA.EF-Tu.GTP complex up to the GTP hydrolysis stage on the ribosome. The chain is Elongation factor Ts from Bordetella parapertussis (strain 12822 / ATCC BAA-587 / NCTC 13253).